The sequence spans 132 residues: Small ribosomal subunit protein uS8c (132 aa).

It belongs to the universal ribosomal protein uS8 family. In terms of assembly, part of the 30S ribosomal subunit.

It localises to the plastid. The protein resides in the chloroplast. One of the primary rRNA binding proteins, it binds directly to 16S rRNA central domain where it helps coordinate assembly of the platform of the 30S subunit. The sequence is that of Small ribosomal subunit protein uS8c (rps8) from Platanus occidentalis (Sycamore).